Here is a 193-residue protein sequence, read N- to C-terminus: Peptidyl-tRNA hydrolase (193 aa).

Residue Tyr-17 participates in tRNA binding. The Proton acceptor role is filled by His-22. Residues Tyr-68, Asn-70, and Asn-116 each contribute to the tRNA site.

The protein belongs to the PTH family. In terms of assembly, monomer.

Its subcellular location is the cytoplasm. It carries out the reaction an N-acyl-L-alpha-aminoacyl-tRNA + H2O = an N-acyl-L-amino acid + a tRNA + H(+). In terms of biological role, hydrolyzes ribosome-free peptidyl-tRNAs (with 1 or more amino acids incorporated), which drop off the ribosome during protein synthesis, or as a result of ribosome stalling. Functionally, catalyzes the release of premature peptidyl moieties from peptidyl-tRNA molecules trapped in stalled 50S ribosomal subunits, and thus maintains levels of free tRNAs and 50S ribosomes. This chain is Peptidyl-tRNA hydrolase, found in Acinetobacter baumannii (strain AB0057).